The sequence spans 715 residues: Fatty acid oxidation complex subunit alpha (715 aa).

Residues 1 to 190 (MIYEGKAITV…KVGAVDAVVA (190 aa)) are enoyl-CoA hydratase/isomerase. Aspartate 297 is a substrate binding site. Residues 312–715 (HDVKQAAVLG…MAKNGQRFFN (404 aa)) are 3-hydroxyacyl-CoA dehydrogenase. NAD(+)-binding positions include methionine 325, aspartate 344, 401–403 (VVE), lysine 408, and serine 430. The For 3-hydroxyacyl-CoA dehydrogenase activity role is filled by histidine 451. Asparagine 454 contacts NAD(+). The substrate site is built by asparagine 501 and tyrosine 660.

In the N-terminal section; belongs to the enoyl-CoA hydratase/isomerase family. This sequence in the C-terminal section; belongs to the 3-hydroxyacyl-CoA dehydrogenase family. As to quaternary structure, heterotetramer of two alpha chains (FadB) and two beta chains (FadA).

It catalyses the reaction a (3S)-3-hydroxyacyl-CoA + NAD(+) = a 3-oxoacyl-CoA + NADH + H(+). It carries out the reaction a (3S)-3-hydroxyacyl-CoA = a (2E)-enoyl-CoA + H2O. The enzyme catalyses a 4-saturated-(3S)-3-hydroxyacyl-CoA = a (3E)-enoyl-CoA + H2O. The catalysed reaction is (3S)-3-hydroxybutanoyl-CoA = (3R)-3-hydroxybutanoyl-CoA. It catalyses the reaction a (3Z)-enoyl-CoA = a 4-saturated (2E)-enoyl-CoA. It carries out the reaction a (3E)-enoyl-CoA = a 4-saturated (2E)-enoyl-CoA. It participates in lipid metabolism; fatty acid beta-oxidation. Functionally, involved in the aerobic and anaerobic degradation of long-chain fatty acids via beta-oxidation cycle. Catalyzes the formation of 3-oxoacyl-CoA from enoyl-CoA via L-3-hydroxyacyl-CoA. It can also use D-3-hydroxyacyl-CoA and cis-3-enoyl-CoA as substrate. This is Fatty acid oxidation complex subunit alpha from Pseudomonas putida (strain GB-1).